The following is a 685-amino-acid chain: Kinesin-related protein 11 (685 aa).

The Kinesin motor domain occupies 4–405; sequence NISVSVRARP…LKFASRAKKI (402 aa). Positions 36 to 105 are disordered; the sequence is TSLPPPITQP…TTVPASPAPT (70 aa). Low complexity predominate over residues 47–105; sequence SSLPPISTPIKSSSSSSTSTSAGSLKTPLKTPLKTPLKTPLKTNSTTTNTTVPASPAPT. 156–163 contributes to the ATP binding site; sequence GITSSGKT. Residues 411-488 are a coiled coil; the sequence is VNEILDDKAL…KINNLNKLIL (78 aa). A disordered region spans residues 495–568; sequence NSASKGGSGS…QSTSSLTIGG (74 aa). Polar residues predominate over residues 511–520; that stretch reads RSTFVSPSQN. Residues 533–565 are compositionally biased toward low complexity; that stretch reads PNSFSNLLLQSPSQNNNNNSHISPLSQSTSSLT. The stretch at 574–683 forms a coiled coil; that stretch reads FESNELIQIQ…LKSKIQEYEV (110 aa).

It belongs to the TRAFAC class myosin-kinesin ATPase superfamily. Kinesin family.

Its subcellular location is the cytoplasm. The protein resides in the cytoskeleton. In terms of biological role, microtubule-associated force-producing protein that plays a role in organelle transport. Its motor activity is directed toward the microtubule's plus end. The sequence is that of Kinesin-related protein 11 (kif11) from Dictyostelium discoideum (Social amoeba).